The sequence spans 365 residues: MSIEIANIKKSFGRTQVLNDISLDIPSGQMVALLGPSGSGKTTLLRIIAGLEHQTSGHIRFHGTDVSRLHARDRKVGFVFQHYALFRHMTVFDNIAFGLTVLPRRERPNAAAIKAKVTKLLEMVQLAHLADRYPAQLSGGQKQRVALARALAVEPQILLLDEPFGALDAQVRKELRRWLRQLHEELKFTSVFVTHDQEEATEVADRVVVMSQGNIEQADAPDQVWREPATRFVLEFMGEVNRLQGTIRGGQFHVGAHRWPLGYTPAYQGPVDLFLRPWEVDISRRTSLDSPLPVQVLEASPKGHYTQLVVQPLGWYNEPLTVVMHGDDAPQRGERLFVGLQHARLYNGDERIEPRDEELALAQSA.

The region spanning 3-237 (IEIANIKKSF…PATRFVLEFM (235 aa)) is the ABC transporter domain. 35-42 (GPSGSGKT) contacts ATP.

Belongs to the ABC transporter superfamily. Sulfate/tungstate importer (TC 3.A.1.6) family. The complex is composed of two ATP-binding proteins (CysA), two transmembrane proteins (CysT and CysW) and a solute-binding protein (CysP).

Its subcellular location is the cell inner membrane. It catalyses the reaction sulfate(out) + ATP + H2O = sulfate(in) + ADP + phosphate + H(+). The catalysed reaction is thiosulfate(out) + ATP + H2O = thiosulfate(in) + ADP + phosphate + H(+). Part of the ABC transporter complex CysAWTP involved in sulfate/thiosulfate import. Responsible for energy coupling to the transport system. This is Sulfate/thiosulfate import ATP-binding protein CysA from Escherichia coli O157:H7.